A 564-amino-acid polypeptide reads, in one-letter code: Dihydroxy-acid dehydratase (564 aa).

C51 lines the [2Fe-2S] cluster pocket. D83 is a Mg(2+) binding site. [2Fe-2S] cluster is bound at residue C124. Residues D125 and K126 each contribute to the Mg(2+) site. K126 is subject to N6-carboxylysine. C196 serves as a coordination point for [2Fe-2S] cluster. E448 contacts Mg(2+). S474 (proton acceptor) is an active-site residue.

The protein belongs to the IlvD/Edd family. In terms of assembly, homodimer. It depends on [2Fe-2S] cluster as a cofactor. Mg(2+) is required as a cofactor.

The catalysed reaction is (2R)-2,3-dihydroxy-3-methylbutanoate = 3-methyl-2-oxobutanoate + H2O. The enzyme catalyses (2R,3R)-2,3-dihydroxy-3-methylpentanoate = (S)-3-methyl-2-oxopentanoate + H2O. The protein operates within amino-acid biosynthesis; L-isoleucine biosynthesis; L-isoleucine from 2-oxobutanoate: step 3/4. It participates in amino-acid biosynthesis; L-valine biosynthesis; L-valine from pyruvate: step 3/4. Its function is as follows. Functions in the biosynthesis of branched-chain amino acids. Catalyzes the dehydration of (2R,3R)-2,3-dihydroxy-3-methylpentanoate (2,3-dihydroxy-3-methylvalerate) into 2-oxo-3-methylpentanoate (2-oxo-3-methylvalerate) and of (2R)-2,3-dihydroxy-3-methylbutanoate (2,3-dihydroxyisovalerate) into 2-oxo-3-methylbutanoate (2-oxoisovalerate), the penultimate precursor to L-isoleucine and L-valine, respectively. The chain is Dihydroxy-acid dehydratase from Polynucleobacter asymbioticus (strain DSM 18221 / CIP 109841 / QLW-P1DMWA-1) (Polynucleobacter necessarius subsp. asymbioticus).